Here is a 254-residue protein sequence, read N- to C-terminus: Cell division protein ZapD (254 aa).

This sequence belongs to the ZapD family. As to quaternary structure, interacts with FtsZ.

It is found in the cytoplasm. Functionally, cell division factor that enhances FtsZ-ring assembly. Directly interacts with FtsZ and promotes bundling of FtsZ protofilaments, with a reduction in FtsZ GTPase activity. In Idiomarina loihiensis (strain ATCC BAA-735 / DSM 15497 / L2-TR), this protein is Cell division protein ZapD.